We begin with the raw amino-acid sequence, 422 residues long: Aliphatic (R)-hydroxynitrile lyase (422 aa).

7 residues coordinate Zn(2+): Cys63, His85, Cys115, Cys118, Cys121, Cys129, and Cys199.

The protein belongs to the zinc-containing alcohol dehydrogenase family. Homodimer. Zn(2+) is required as a cofactor.

It carries out the reaction (2R)-2-hydroxy-2-methylbutanenitrile = butan-2-one + hydrogen cyanide. Functionally, involved in the catabolism of cyanogenic glycosides. Naturally occurring substrates are the aliphatic acetone cyanohydrin and butan-2-one cyanohydrin, which are the aglycones of the cyanogenic glycosides linamarin, lotaustralin, linustatin and neolinustatin. Can use various aliphatic ketones and aldehydes as substrates, but not aromatic ketones. This chain is Aliphatic (R)-hydroxynitrile lyase, found in Linum usitatissimum (Flax).